Here is a 330-residue protein sequence, read N- to C-terminus: MSNKSAWQPQFDEIHSSVQEAEGFLQSSNDVQKAIDEVHYPDSLNDLSEISKNLYISSWKTASELVSTSDKGIDYTLSAMSINPNLSVPEQQHLWLQIEDSSSQNILQYFEKSNKFIAFALSKNAKVLVHCFAGISRSVTLVAAYLMKENNWNTEEALSHINERRSGISPNANFLRQLRVYFECNYQLDRSLRPYRQWLFRRYGDFAVLNTRVPSEVAYAETVRARAGQLELRCKKCRFVLASSDYLVSHEPKDENNYSHTRCTHYFLEPIRWMQPELELGNLEGRFDCPKCNSKIGSYKWQGLQCSCLQWVCPALSILQSRVDAVRKLG.

The Tyrosine-protein phosphatase domain maps to 45–187; it reads NDLSEISKNL…LRVYFECNYQ (143 aa). Cys131 acts as the Phosphocysteine intermediate in catalysis.

It belongs to the protein-tyrosine phosphatase family. Non-receptor class dual specificity subfamily.

It localises to the cytoplasm. The protein localises to the nucleus. The catalysed reaction is O-phospho-L-tyrosyl-[protein] + H2O = L-tyrosyl-[protein] + phosphate. In terms of biological role, may be directly involved in signal transduction and/or cell cycle regulation. It is necessary for maintaining growth rate or spore germination. Could show both activity toward tyrosine-protein phosphate as well as with serine-protein phosphate. The sequence is that of Tyrosine-protein phosphatase yvh1 (yvh1) from Schizosaccharomyces pombe (strain 972 / ATCC 24843) (Fission yeast).